Here is a 491-residue protein sequence, read N- to C-terminus: MISKQEYQAQAAQGYNRIPLVQELLADLDTPLSLYLKLANRPYTYLLESVVGGERFGRYSFIGLPCSHYLKAGGKHVDVYQNGEIVEQYDGNPLPFIEAFHNRFKTPEIPSLPRFTGGLVGYFGYETVYNFEHFAHRLKNTAKANPLGTPDILLMLSQELAVIDNLSGKIHLIVYADPSQPDSYERARERLEDIRTQLRQSCAIPLSLGSKQTQAVSEFGEEPFKACVDKIKDYIFAGDCMQVVPSQRMSMEFTDNPLALYRALRTLNPSPYLFYYDFGDFHIVGSSPEILVRRERDDVIVRPIAGTRLRGKTPAEDLANEQDLLSDAKEIAEHVMLIDLGRNDVGRISKTGEVKVTDKMVIEKYSHVMHIVSNVEGCLKEGVTNMDILAATFPAGTLSGAPKVRAMEIIEEIEPEKRGIYGGAVGVWGFNNDMDLAIAIRTAVIKNNTLFIQSGAGVVADSDPTSEWQETQNKARAVVRAAQMVQEGLDK.

L-tryptophan-binding positions include serine 49 and 271–273 (PYL). 306–307 (GT) lines the chorismate pocket. Glutamate 333 is a Mg(2+) binding site. Residues tyrosine 421, arginine 441, 455–457 (GAG), and glycine 457 each bind chorismate. Mg(2+) is bound at residue glutamate 470.

This sequence belongs to the anthranilate synthase component I family. As to quaternary structure, heterotetramer consisting of two non-identical subunits: a beta subunit (TrpG) and a large alpha subunit (TrpE). The cofactor is Mg(2+).

The catalysed reaction is chorismate + L-glutamine = anthranilate + pyruvate + L-glutamate + H(+). Its pathway is amino-acid biosynthesis; L-tryptophan biosynthesis; L-tryptophan from chorismate: step 1/5. Feedback inhibited by tryptophan. In terms of biological role, part of a heterotetrameric complex that catalyzes the two-step biosynthesis of anthranilate, an intermediate in the biosynthesis of L-tryptophan. In the first step, the glutamine-binding beta subunit (TrpG) of anthranilate synthase (AS) provides the glutamine amidotransferase activity which generates ammonia as a substrate that, along with chorismate, is used in the second step, catalyzed by the large alpha subunit of AS (TrpE) to produce anthranilate. In the absence of TrpG, TrpE can synthesize anthranilate directly from chorismate and high concentrations of ammonia. This chain is Anthranilate synthase component 1 (trpE), found in Neisseria gonorrhoeae (strain ATCC 700825 / FA 1090).